The sequence spans 348 residues: Lipoyl synthase (348 aa).

7 residues coordinate [4Fe-4S] cluster: cysteine 55, cysteine 60, cysteine 66, cysteine 81, cysteine 85, cysteine 88, and serine 292. The Radical SAM core domain maps to 67–281 (WESREATFLI…SDEAYEIGFA (215 aa)).

It belongs to the radical SAM superfamily. Lipoyl synthase family. Requires [4Fe-4S] cluster as cofactor.

It is found in the cytoplasm. It carries out the reaction [[Fe-S] cluster scaffold protein carrying a second [4Fe-4S](2+) cluster] + N(6)-octanoyl-L-lysyl-[protein] + 2 oxidized [2Fe-2S]-[ferredoxin] + 2 S-adenosyl-L-methionine + 4 H(+) = [[Fe-S] cluster scaffold protein] + N(6)-[(R)-dihydrolipoyl]-L-lysyl-[protein] + 4 Fe(3+) + 2 hydrogen sulfide + 2 5'-deoxyadenosine + 2 L-methionine + 2 reduced [2Fe-2S]-[ferredoxin]. The protein operates within protein modification; protein lipoylation via endogenous pathway; protein N(6)-(lipoyl)lysine from octanoyl-[acyl-carrier-protein]: step 2/2. In terms of biological role, catalyzes the radical-mediated insertion of two sulfur atoms into the C-6 and C-8 positions of the octanoyl moiety bound to the lipoyl domains of lipoate-dependent enzymes, thereby converting the octanoylated domains into lipoylated derivatives. The chain is Lipoyl synthase from Corynebacterium efficiens (strain DSM 44549 / YS-314 / AJ 12310 / JCM 11189 / NBRC 100395).